The following is a 435-amino-acid chain: Exodeoxyribonuclease 7 large subunit (435 aa).

Residues 1–10 (MRGTRVTETA) are compositionally biased toward polar residues. Disordered stretches follow at residues 1 to 21 (MRGTRVTETASAPRMAPGPPT) and 413 to 435 (AGKALPSPAQGATNGSLAAPRGK).

This sequence belongs to the XseA family. In terms of assembly, heterooligomer composed of large and small subunits.

The protein resides in the cytoplasm. It catalyses the reaction Exonucleolytic cleavage in either 5'- to 3'- or 3'- to 5'-direction to yield nucleoside 5'-phosphates.. In terms of biological role, bidirectionally degrades single-stranded DNA into large acid-insoluble oligonucleotides, which are then degraded further into small acid-soluble oligonucleotides. The chain is Exodeoxyribonuclease 7 large subunit from Leifsonia xyli subsp. xyli (strain CTCB07).